Consider the following 182-residue polypeptide: NADH-quinone oxidoreductase subunit 9 (182 aa).

4Fe-4S ferredoxin-type domains follow at residues 43–73 (LTRH…VEPA) and 89–118 (KVYE…LGYD). 10 residues coordinate [4Fe-4S] cluster: C53, C56, S57, C59, C63, C98, I99, C101, C104, and C108.

The protein belongs to the complex I 23 kDa subunit family. NDH-1 is composed of 15 different subunits, Nqo1 to Nqo15. The complex has a L-shaped structure, with the hydrophobic arm (subunits Nqo7, Nqo8 and Nqo10 to Nqo14) embedded in the membrane and the hydrophilic peripheral arm (subunits Nqo1 to Nqo6, Nqo9 and Nqo15) protruding into the bacterial cytoplasm. The hydrophilic domain contains all the redox centers. The cofactor is [4Fe-4S] cluster.

It localises to the cell membrane. It carries out the reaction a quinone + NADH + 5 H(+)(in) = a quinol + NAD(+) + 4 H(+)(out). NDH-1 shuttles electrons from NADH, via FMN and iron-sulfur (Fe-S) centers, to quinones in the respiratory chain. The immediate electron acceptor for the enzyme in this species is menaquinone. Couples the redox reaction to proton translocation (for every two electrons transferred, four hydrogen ions are translocated across the cytoplasmic membrane), and thus conserves the redox energy in a proton gradient required for the synthesis of ATP. The role of the Nqo9 subunit appears to provide a 'connecting chain' of two clusters between cluster N5 and the terminal cluster N2, and to stabilize the structure of the complex by interacting with other subunits. This chain is NADH-quinone oxidoreductase subunit 9 (nqo9), found in Thermus thermophilus (strain ATCC 27634 / DSM 579 / HB8).